Here is a 147-residue protein sequence, read N- to C-terminus: SPI-1 type 3 secretion system pilotin (147 aa).

Residues 1-15 (MKKFYSCLPVFLLIG) form the signal peptide. Cys16 is lipidated: N-palmitoyl cysteine. Cys16 carries the S-diacylglycerol cysteine lipid modification.

Belongs to the InvH family.

It is found in the cell outer membrane. Involved in the synthesis of the type III secretion system (T3SS), also called injectisome, which is used to inject bacterial effector proteins into eukaryotic host cells. Pilot protein that is required for the proper localization of the secretin InvG/SctC in the outer membrane. Necessary for efficient adherence and entry of these organisms into cultured epithelial cells. In Salmonella choleraesuis (strain SC-B67), this protein is SPI-1 type 3 secretion system pilotin.